A 59-amino-acid polypeptide reads, in one-letter code: Large ribosomal subunit protein uL30 (59 aa).

This sequence belongs to the universal ribosomal protein uL30 family. Part of the 50S ribosomal subunit.

The protein is Large ribosomal subunit protein uL30 of Listeria innocua serovar 6a (strain ATCC BAA-680 / CLIP 11262).